Reading from the N-terminus, the 84-residue chain is Putative glutaredoxin MT3292 (84 aa).

The Glutaredoxin domain maps to 1-84 (MITAALTIYT…VKAKLVKIAG (84 aa)).

This Mycobacterium tuberculosis (strain CDC 1551 / Oshkosh) protein is Putative glutaredoxin MT3292.